Reading from the N-terminus, the 111-residue chain is WAP four-disulfide core domain protein 12 (111 aa).

Residues Met-1–Gly-23 form the signal peptide. The WAP domain occupies Asn-27–Val-74. Disulfide bonds link Cys-34–Cys-62, Cys-41–Cys-66, Cys-49–Cys-61, and Cys-55–Cys-70.

Its subcellular location is the secreted. Its function is as follows. Antibacterial protein. Putative acid-stable proteinase inhibitor. The protein is WAP four-disulfide core domain protein 12 (WFDC12) of Saimiri boliviensis boliviensis (Bolivian squirrel monkey).